The following is a 104-amino-acid chain: SOSS complex subunit C (104 aa).

Belongs to the SOSS-C family. In terms of assembly, belongs to the multiprotein complex Integrator. Component of the SOSS complex, composed of SOSS-B (SOSS-B1/NABP2 or SOSS-B2/NABP1), SOSS-A/INTS3 and SOSS-C/INIP.

The protein resides in the nucleus. Component of the SOSS complex, a multiprotein complex that functions downstream of the MRN complex to promote DNA repair and G2/M checkpoint. The SOSS complex associates with single-stranded DNA at DNA lesions and influences diverse endpoints in the cellular DNA damage response including cell-cycle checkpoint activation, recombinational repair and maintenance of genomic stability. Required for efficient homologous recombination-dependent repair of double-strand breaks (DSBs). The chain is SOSS complex subunit C (INIP) from Taeniopygia guttata (Zebra finch).